Consider the following 107-residue polypeptide: Multidrug resistance protein mmr (107 aa).

A run of 4 helical transmembrane segments spans residues 2–19 (IYLY…ATSL), 29–51 (LWPT…LSIS), 58–80 (VAYA…LFLG), and 84–106 (SVMK…LAGA).

Belongs to the drug/metabolite transporter (DMT) superfamily. Small multidrug resistance (SMR) (TC 2.A.7.1) family. Mmr subfamily.

It is found in the cell membrane. Its function is as follows. Multidrug efflux pump. Confers resistance to tetraphenylphosphonium (TPP), erythromycin, ethidium bromide, acriflavine, safranin O and pyronin Y. In Mycobacterium bovis (strain ATCC BAA-935 / AF2122/97), this protein is Multidrug resistance protein mmr (mmr).